A 757-amino-acid chain; its full sequence is Polyribonucleotide nucleotidyltransferase (757 aa).

The Mg(2+) site is built by aspartate 488 and aspartate 494. The KH domain maps to 555-614; the sequence is PKLYTMKINAEKIRDVIGKGGAVIRALTEETGCQINIEEDGTITIAATDAAKADIAKRRI. The S1 motif domain maps to 624–692; sequence GKIYEGPVTK…ERGRVKLSMK (69 aa). The interval 693 to 757 is disordered; the sequence is VLAERPAPGS…ADTGSGQRVG (65 aa). The span at 720–736 shows a compositional bias: basic and acidic residues; that stretch reads ALAEREPRREMRDHGHP. Residues 737–747 are compositionally biased toward low complexity; it reads PSEQQQQQSPP.

It belongs to the polyribonucleotide nucleotidyltransferase family. Mg(2+) serves as cofactor.

Its subcellular location is the cytoplasm. It carries out the reaction RNA(n+1) + phosphate = RNA(n) + a ribonucleoside 5'-diphosphate. Functionally, involved in mRNA degradation. Catalyzes the phosphorolysis of single-stranded polyribonucleotides processively in the 3'- to 5'-direction. The polypeptide is Polyribonucleotide nucleotidyltransferase (Verminephrobacter eiseniae (strain EF01-2)).